The chain runs to 325 residues: Replication factor C small subunit (325 aa).

52 to 59 (GPAGVGKT) provides a ligand contact to ATP.

This sequence belongs to the activator 1 small subunits family. RfcS subfamily. As to quaternary structure, heteromultimer composed of small subunits (RfcS) and large subunits (RfcL).

In terms of biological role, part of the RFC clamp loader complex which loads the PCNA sliding clamp onto DNA. The sequence is that of Replication factor C small subunit from Natronomonas pharaonis (strain ATCC 35678 / DSM 2160 / CIP 103997 / JCM 8858 / NBRC 14720 / NCIMB 2260 / Gabara) (Halobacterium pharaonis).